The sequence spans 555 residues: 2-isopropylmalate synthase (555 aa).

The region spanning 30–303 (PIWCSVDLRD…DPGLDCTDIN (274 aa)) is the Pyruvate carboxyltransferase domain. Positions 39, 242, 244, and 278 each coordinate Mg(2+). Positions 437 to 555 (QPDARIKFVD…VSAANRVIAK (119 aa)) are regulatory domain.

The protein belongs to the alpha-IPM synthase/homocitrate synthase family. LeuA type 2 subfamily. Homodimer. Requires Mg(2+) as cofactor.

It is found in the cytoplasm. It carries out the reaction 3-methyl-2-oxobutanoate + acetyl-CoA + H2O = (2S)-2-isopropylmalate + CoA + H(+). Its pathway is amino-acid biosynthesis; L-leucine biosynthesis; L-leucine from 3-methyl-2-oxobutanoate: step 1/4. Its function is as follows. Catalyzes the condensation of the acetyl group of acetyl-CoA with 3-methyl-2-oxobutanoate (2-ketoisovalerate) to form 3-carboxy-3-hydroxy-4-methylpentanoate (2-isopropylmalate). This Brucella suis biovar 1 (strain 1330) protein is 2-isopropylmalate synthase.